Reading from the N-terminus, the 603-residue chain is Chaperone protein DnaK (603 aa).

T175 is modified (phosphothreonine; by autocatalysis). Positions 573 to 586 (AQQAQQQNPDNQNN) are enriched in low complexity. The interval 573 to 603 (AQQAQQQNPDNQNNNKDDVTEATVTDDSTKK) is disordered. Residues 594–603 (ATVTDDSTKK) show a composition bias toward polar residues.

It belongs to the heat shock protein 70 family.

Acts as a chaperone. This Ureaplasma parvum serovar 3 (strain ATCC 27815 / 27 / NCTC 11736) protein is Chaperone protein DnaK.